The following is an 88-amino-acid chain: Small ribosomal subunit protein bS20 (88 aa).

Positions 1–27 (MANSKSAKKRALQSEKRRQHNASRRSM) are disordered.

This sequence belongs to the bacterial ribosomal protein bS20 family.

Binds directly to 16S ribosomal RNA. This Shewanella loihica (strain ATCC BAA-1088 / PV-4) protein is Small ribosomal subunit protein bS20.